Consider the following 328-residue polypeptide: Hydrogenase-2 operon protein HybA (328 aa).

Positions 1 to 27 are cleaved as a signal peptide; the sequence is MNRRNFIKAASCGALLTGALPSVSHAA. 4Fe-4S ferredoxin-type domains follow at residues 38-68, 103-134, and 136-165; these read LGML…RNPQ, NGYA…KDPK, and GIVH…YDYN. [4Fe-4S] cluster-binding residues include cysteine 47, cysteine 50, cysteine 53, cysteine 57, cysteine 112, cysteine 115, cysteine 120, cysteine 124, cysteine 145, cysteine 148, cysteine 151, cysteine 155, cysteine 174, cysteine 177, cysteine 193, and cysteine 197.

It depends on [4Fe-4S] cluster as a cofactor.

It localises to the periplasm. Participates in the periplasmic electron-transferring activity of hydrogenase 2 during its catalytic turnover. The chain is Hydrogenase-2 operon protein HybA (hybA) from Escherichia coli O157:H7.